Consider the following 289-residue polypeptide: 4-hydroxybenzoate octaprenyltransferase (289 aa).

8 consecutive transmembrane segments (helical) span residues 23–43 (IGALLLLWPTLWALWVATPGV), 46–66 (LWILAVFVAGVWLMRAAGCVV), 99–119 (LFVVLVALSFLLVLTLNTMTI), 141–161 (LPQVVLGAAFGWSIPMAFAAV), 163–183 (ESVPLSCWLMFLANILWAVAY), 213–233 (LIIGILQIAVLALMALIGWLN), 234–254 (GLGWGYYWSVLVAGALFVYQQ), and 268–288 (AFMNNNYVGLVLFLGLAMSYV).

This sequence belongs to the UbiA prenyltransferase family. Mg(2+) is required as a cofactor.

Its subcellular location is the cell inner membrane. It carries out the reaction all-trans-octaprenyl diphosphate + 4-hydroxybenzoate = 4-hydroxy-3-(all-trans-octaprenyl)benzoate + diphosphate. The protein operates within cofactor biosynthesis; ubiquinone biosynthesis. In terms of biological role, catalyzes the prenylation of para-hydroxybenzoate (PHB) with an all-trans polyprenyl group. Mediates the second step in the final reaction sequence of ubiquinone-8 (UQ-8) biosynthesis, which is the condensation of the polyisoprenoid side chain with PHB, generating the first membrane-bound Q intermediate 3-octaprenyl-4-hydroxybenzoate. The sequence is that of 4-hydroxybenzoate octaprenyltransferase from Citrobacter koseri (strain ATCC BAA-895 / CDC 4225-83 / SGSC4696).